We begin with the raw amino-acid sequence, 687 residues long: Phage-like element PBSX protein XkdV (687 aa).

To B.subtilis YqcC.

In Bacillus subtilis (strain 168), this protein is Phage-like element PBSX protein XkdV (xkdV).